A 96-amino-acid chain; its full sequence is ESAT-6-like protein EsxR (96 aa).

The protein belongs to the WXG100 family. ESAT-6 subfamily.

The protein resides in the secreted. This is ESAT-6-like protein EsxR from Mycobacterium bovis (strain ATCC BAA-935 / AF2122/97).